The primary structure comprises 347 residues: ATPase GET3 (347 aa).

Residue 26–33 (KGGVGKTT) coordinates ATP. The active site involves Asp57. 2 residues coordinate ATP: Glu240 and Asn267. Zn(2+)-binding residues include Cys279 and Cys282.

It belongs to the arsA ATPase family. As to quaternary structure, homodimer. Component of the Golgi to ER traffic (GET) complex, which is composed of GET1, GET2 and GET3. Within the complex, GET1 and GET2 form a heterotetramer which is stabilized by phosphatidylinositol binding and which binds to the GET3 homodimer. Interacts with the chloride channel protein GEF1.

Its subcellular location is the cytoplasm. The protein localises to the endoplasmic reticulum. The protein resides in the golgi apparatus. ATPase required for the post-translational delivery of tail-anchored (TA) proteins to the endoplasmic reticulum. Recognizes and selectively binds the transmembrane domain of TA proteins in the cytosol. This complex then targets to the endoplasmic reticulum by membrane-bound receptors GET1 and GET2, where the tail-anchored protein is released for insertion. This process is regulated by ATP binding and hydrolysis. ATP binding drives the homodimer towards the closed dimer state, facilitating recognition of newly synthesized TA membrane proteins. ATP hydrolysis is required for insertion. Subsequently, the homodimer reverts towards the open dimer state, lowering its affinity for the GET1-GET2 receptor, and returning it to the cytosol to initiate a new round of targeting. Cooperates with the HDEL receptor ERD2 to mediate the ATP-dependent retrieval of resident ER proteins that contain a C-terminal H-D-E-L retention signal from the Golgi to the ER. Involved in low-level resistance to the oxyanions arsenite and arsenate, and in heat tolerance. The protein is ATPase GET3 of Scheffersomyces stipitis (strain ATCC 58785 / CBS 6054 / NBRC 10063 / NRRL Y-11545) (Yeast).